Consider the following 574-residue polypeptide: Optineurin (574 aa).

Residues 1–33 (MSHQPLSCLTEKGDSPTETTGNGPPTLAHPNLD) are disordered. Residues 38 to 170 (HELLQQMREL…VSELQLKLNS (133 aa)) adopt a coiled-coil conformation. The tract at residues 58-209 (MKLNNQAMKG…GPIRTDSIDT (152 aa)) is interaction with Rab8. The LIR signature appears at 176 to 181 (DSFVEI). A Phosphoserine; by TBK1 modification is found at Ser-177. At Ser-198 the chain carries Phosphoserine. A coiled-coil region spans residues 233–496 (CLREGNQKVE…ALQLAVLLKD (264 aa)). A compositionally biased stretch (basic and acidic residues) spans 262 to 286 (AKDRSETETQTEEHKEQEKEEEKSP). The segment at 262–292 (AKDRSETETQTEEHKEQEKEEEKSPETVGSE) is disordered. Phosphoserine is present on Ser-336. The interval 405-574 (KRRESEKVDK…LLIHVTDCII (170 aa)) is interaction with HD. The interaction with MYO6 stretch occupies residues 406-515 (RRESEKVDKV…RQSLMEMQSR (110 aa)). Positions 468 to 473 (DFHAER) match the UBAN motif. Ser-521 carries the post-translational modification Phosphoserine. Residues 544–574 (QQNIPIHSCPKCGEVLPDIDTLLIHVTDCII) form a CCHC NOA-type zinc finger. Zn(2+) is bound by residues Cys-552, Cys-555, His-568, and Cys-572.

In terms of assembly, self-associates. Interacts with HD. Interacts with GTF3A. Interacts with MYO6. Interacts (via UBAN) with ubiquitinated TFRC. Interacts with GTP-bound Rab8 (RAB8A and/or RAB8B). Interacts with TBC1D17. Interacts with TBK1. Interacts with TRAF3. Binds to linear ubiquitin chains. Interacts with LC3 family members MAP1LC3A, MAP1LC3B, GABARAP, GABARAPL1 and GABARAPL2; OPTN phosphorylation increases the association (at least with MAP1LC3B). Interacts with RAB12; the interaction may be indirect. Interacts with TBK1; this interaction leads to the Golgi localization of TBK1 and its subsequent activation. Interacts with palmitoyltransferase ZDHHC17/HIP14; the interaction does not lead to palmitoylation of OPTN. Interacts with CYLD. Interacts with TOM1; the interaction is indirect and is mediated by MYO6, which acts as a bridge between TOM1 and OPTN. Interacts with USP12; the interaction is independent of USP12 deubiquitinase activity and may be involved in regulation of autophagic flux. Post-translationally, phosphorylated by TBK1, leading to restrict bacterial proliferation in case of infection. In terms of tissue distribution, present in aqueous humor of the eye (at protein level). Expressed in trabecular meshwork and astrocytes.

It is found in the cytoplasm. The protein localises to the perinuclear region. The protein resides in the golgi apparatus. Its subcellular location is the trans-Golgi network. It localises to the cytoplasmic vesicle. It is found in the autophagosome. The protein localises to the recycling endosome. Plays an important role in the maintenance of the Golgi complex, in membrane trafficking, in exocytosis, through its interaction with myosin VI and Rab8. Links myosin VI to the Golgi complex and plays an important role in Golgi ribbon formation. Negatively regulates the induction of IFNB in response to RNA virus infection. Plays a neuroprotective role in the eye and optic nerve. Probably part of the TNF-alpha signaling pathway that can shift the equilibrium toward induction of cell death. May act by regulating membrane trafficking and cellular morphogenesis via a complex that contains Rab8 and huntingtin (HD). Mediates the interaction of Rab8 with the probable GTPase-activating protein TBC1D17 during Rab8-mediated endocytic trafficking, such as that of transferrin receptor (TFRC/TfR); regulates Rab8 recruitment to tubules emanating from the endocytic recycling compartment. Autophagy receptor that interacts directly with both the cargo to become degraded and an autophagy modifier of the MAP1 LC3 family; targets ubiquitin-coated bacteria (xenophagy) and appears to function in the same pathway as SQSTM1 and CALCOCO2/NDP52. The protein is Optineurin (OPTN) of Sus scrofa (Pig).